We begin with the raw amino-acid sequence, 1489 residues long: ZEB2-regulated ABC transporter 1 (1489 aa).

A disordered region spans residues 1-55 (MALPEANMSSTRSEQSSRSHDTIVGNEQPHSEKPAASAPGDQMSSDDEDEGPQTE). N-linked (GlcNAc...) asparagine glycosylation occurs at Asn7. Acidic residues predominate over residues 44–53 (SSDDEDEGPQ). N-linked (GlcNAc...) asparagine glycosylation is found at Asn70, Asn73, Asn118, Asn332, and Asn469. Residues 152-408 (LGLPDMVHQM…FINLGFECPD (257 aa)) enclose the ABC transporter 1 domain. The next 5 helical transmembrane spans lie at 513–533 (LLGS…VAFI), 552–572 (GATL…EILT), 599–619 (ILVD…TLYF), 628–648 (GAFF…SGVF), and 662–682 (MVPA…VVPV). The N-linked (GlcNAc...) asparagine glycan is linked to Asn714. A helical transmembrane segment spans residues 773 to 793 (GILIAMTIFNHVVYIVATEFI). Residues 811–834 (PSKAKSDPEASSSRPIPTTEKNNN) form a disordered region. Over residues 819 to 834 (EASSSRPIPTTEKNNN) the composition is skewed to polar residues. The ABC transporter 2 domain occupies 846 to 1088 (FHWNDVCYDI…TLTNYFVKHG (243 aa)). An ATP-binding site is contributed by 882–889 (GVSGAGKT). 5 helical membrane-spanning segments follow: residues 1190–1210 (ALCI…PLSL), 1218–1238 (FAIF…MPHF), 1269–1289 (IPWN…PVGF), 1307–1327 (WLLI…AIAI), and 1333–1353 (AGGN…GVLA). Asn1402 carries N-linked (GlcNAc...) asparagine glycosylation. The chain crosses the membrane as a helical span at residues 1457 to 1477 (GIGMVYIVVNIVGALFLYWLI).

It belongs to the ABC transporter superfamily. ABCG family. PDR (TC 3.A.1.205) subfamily.

It localises to the cell membrane. Its subcellular location is the vacuole membrane. ABC transporter involved in zearalenone production. The sequence is that of ZEB2-regulated ABC transporter 1 from Gibberella zeae (strain ATCC MYA-4620 / CBS 123657 / FGSC 9075 / NRRL 31084 / PH-1) (Wheat head blight fungus).